The primary structure comprises 142 residues: Large ribosomal subunit protein uL13 (142 aa).

Belongs to the universal ribosomal protein uL13 family. As to quaternary structure, part of the 50S ribosomal subunit.

Functionally, this protein is one of the early assembly proteins of the 50S ribosomal subunit, although it is not seen to bind rRNA by itself. It is important during the early stages of 50S assembly. This Pyrococcus horikoshii (strain ATCC 700860 / DSM 12428 / JCM 9974 / NBRC 100139 / OT-3) protein is Large ribosomal subunit protein uL13.